We begin with the raw amino-acid sequence, 298 residues long: MADEAGTRSAGGRPIPAAEPLRPALSRQRSQGAVHLRVAPAGTAADAPTRIVDLAESGPLRLRCPRQGAERMLEGVLVNTGGGIACGDVFTVSVTVEPGGACVLTTTAAEKIYRSDGPCAEIVNRASVGAGGRLDWLPQETILFDRARLVRRFEADLAPDASLLVAEIAVLGRAARGESLEQALFEDRWRIRRDGRLVYADSLRLDGAVTALMNRRAIGGGARALATILDLSLRAEGRLDEARALLDALPAQVEAGASAWNGHLAVRMLAPTVAPLRDAAARFLAAWRGQPMPRVWQT.

The segment at 1–30 (MADEAGTRSAGGRPIPAAEPLRPALSRQRS) is disordered.

It belongs to the UreD family. In terms of assembly, ureD, UreF and UreG form a complex that acts as a GTP-hydrolysis-dependent molecular chaperone, activating the urease apoprotein by helping to assemble the nickel containing metallocenter of UreC. The UreE protein probably delivers the nickel.

It is found in the cytoplasm. In terms of biological role, required for maturation of urease via the functional incorporation of the urease nickel metallocenter. The chain is Urease accessory protein UreD 3 from Methylorubrum extorquens (strain PA1) (Methylobacterium extorquens).